The chain runs to 671 residues: DNA ligase (671 aa).

NAD(+) contacts are provided by residues 32 to 36, 81 to 82, and glutamate 113; these read DAEYD and SL. Lysine 115 (N6-AMP-lysine intermediate) is an active-site residue. The NAD(+) site is built by arginine 136, glutamate 173, lysine 290, and lysine 314. Zn(2+) contacts are provided by cysteine 408, cysteine 411, cysteine 426, and cysteine 432. The region spanning 593-671 is the BRCT domain; sequence EIDSPFAGKT…EAEMLRLLGS (79 aa).

This sequence belongs to the NAD-dependent DNA ligase family. LigA subfamily. It depends on Mg(2+) as a cofactor. Mn(2+) is required as a cofactor.

The catalysed reaction is NAD(+) + (deoxyribonucleotide)n-3'-hydroxyl + 5'-phospho-(deoxyribonucleotide)m = (deoxyribonucleotide)n+m + AMP + beta-nicotinamide D-nucleotide.. Functionally, DNA ligase that catalyzes the formation of phosphodiester linkages between 5'-phosphoryl and 3'-hydroxyl groups in double-stranded DNA using NAD as a coenzyme and as the energy source for the reaction. It is essential for DNA replication and repair of damaged DNA. The protein is DNA ligase of Shigella boydii serotype 4 (strain Sb227).